Consider the following 90-residue polypeptide: Small ribosomal subunit protein bS16 (90 aa).

It belongs to the bacterial ribosomal protein bS16 family.

The protein is Small ribosomal subunit protein bS16 of Oceanobacillus iheyensis (strain DSM 14371 / CIP 107618 / JCM 11309 / KCTC 3954 / HTE831).